Consider the following 129-residue polypeptide: Protein yippee-like At5g53940 (129 aa).

The region spanning R12–I109 is the Yippee domain. 4 residues coordinate Zn(2+): C16, C19, C72, and C75.

Belongs to the yippee family.

This chain is Protein yippee-like At5g53940, found in Arabidopsis thaliana (Mouse-ear cress).